A 127-amino-acid chain; its full sequence is Large ribosomal subunit protein uL18 (127 aa).

This sequence belongs to the universal ribosomal protein uL18 family. In terms of assembly, part of the 50S ribosomal subunit; part of the 5S rRNA/L5/L18/L25 subcomplex. Contacts the 5S and 23S rRNAs.

In terms of biological role, this is one of the proteins that bind and probably mediate the attachment of the 5S RNA into the large ribosomal subunit, where it forms part of the central protuberance. This chain is Large ribosomal subunit protein uL18, found in Streptomyces avermitilis (strain ATCC 31267 / DSM 46492 / JCM 5070 / NBRC 14893 / NCIMB 12804 / NRRL 8165 / MA-4680).